Consider the following 348-residue polypeptide: [LysW]-L-2-aminoadipate 6-phosphate reductase (348 aa).

14-17 (SGYA) contributes to the NADP(+) binding site. Residue C151 is part of the active site. N315 is an NADP(+) binding site.

The protein belongs to the NAGSA dehydrogenase family. Type 1 subfamily. LysY sub-subfamily.

The protein localises to the cytoplasm. It catalyses the reaction [amino-group carrier protein]-C-terminal-N-(1-carboxy-5-oxopentan-1-yl)-L-glutamine + phosphate + NADP(+) = [amino-group carrier protein]-C-terminal-N-(1-carboxy-5-phosphooxy-5-oxopentan-1-yl)-L-glutamine + NADPH + H(+). It functions in the pathway amino-acid biosynthesis; L-lysine biosynthesis via AAA pathway; L-lysine from L-alpha-aminoadipate (Thermus route): step 3/5. In terms of biological role, catalyzes the NADPH-dependent reduction of [LysW]-aminoadipate 6-phosphate to yield [LysW]-aminoadipate 6-semialdehyde. The chain is [LysW]-L-2-aminoadipate 6-phosphate reductase from Deinococcus radiodurans (strain ATCC 13939 / DSM 20539 / JCM 16871 / CCUG 27074 / LMG 4051 / NBRC 15346 / NCIMB 9279 / VKM B-1422 / R1).